The primary structure comprises 417 residues: Gamma-glutamyl phosphate reductase (417 aa).

Belongs to the gamma-glutamyl phosphate reductase family.

The protein localises to the cytoplasm. The catalysed reaction is L-glutamate 5-semialdehyde + phosphate + NADP(+) = L-glutamyl 5-phosphate + NADPH + H(+). The protein operates within amino-acid biosynthesis; L-proline biosynthesis; L-glutamate 5-semialdehyde from L-glutamate: step 2/2. Catalyzes the NADPH-dependent reduction of L-glutamate 5-phosphate into L-glutamate 5-semialdehyde and phosphate. The product spontaneously undergoes cyclization to form 1-pyrroline-5-carboxylate. The protein is Gamma-glutamyl phosphate reductase of Heliobacterium modesticaldum (strain ATCC 51547 / Ice1).